The sequence spans 164 residues: Lectin (164 aa).

The first 15 residues, 1–15 (TVATILTILASTCMA), serve as a signal peptide directing secretion. Positions 16–125 (RNVLVNNEGL…DIWSTGTYRK (110 aa)) constitute a Bulb-type lectin domain. Cysteines 44 and 68 form a disulfide.

As to quaternary structure, homotetramer. Post-translationally, not glycosylated.

In terms of biological role, mannose-specific lectin. Induces a Th1-type immune response in vitro. Causes a 4-fold increase in the proliferation of murine thymocytes and a significant increase in the production of nitric oxide at 24 hours in a macrophage cell line. Stimulates the production of the pro-inflammatory cytokines TNF and IL12 by rat peritoneal macrophages in a dose-dependent manner and of the cytokines IFNG and IL2 in murine thymocytes. Has hemagglutination activity towards rabbit erythrocytes. The polypeptide is Lectin (Allium cepa (Onion)).